The sequence spans 364 residues: MKKLAISIGDINSIGLEILVRSHEELSKICTPFYFIHESLLNKALKLLNLKLFNAKIVAFKDDKDYEFNFIKKENSLEIYSFCLPLGFKVDENFEIQAGEIDAKSGLYGFLSFKAASYFVYEKHAHALLTLPIHKKAWEDAGLKYKGHTDALRDFFKKNAIMMLGCKELFVGLFSEHIPLAKVSKKITFKNLSIFLKDFYKETHFKKMGLLGFNPHAGDYGVIGGEEEKIMEKAIAFVNAFLHSKKDEKFFKKALKDENLQKELLLNFKGKGVYLPYPLVADTAFTKTGLKNCNRLVAMYHDLALAPLKALYFDKSINVSLNLPIIRVSVDHGTAFDKAYKNAKINTKSYFEAAKFAINLHSKA.

Substrate contacts are provided by H148 and T149. Residues H177, H216, and H301 each coordinate a divalent metal cation. Residues K309, N318, and R327 each contribute to the substrate site.

This sequence belongs to the PdxA family. In terms of assembly, homodimer. Zn(2+) is required as a cofactor. The cofactor is Mg(2+). Co(2+) serves as cofactor.

The protein resides in the cytoplasm. The enzyme catalyses 4-(phosphooxy)-L-threonine + NAD(+) = 3-amino-2-oxopropyl phosphate + CO2 + NADH. It functions in the pathway cofactor biosynthesis; pyridoxine 5'-phosphate biosynthesis; pyridoxine 5'-phosphate from D-erythrose 4-phosphate: step 4/5. Catalyzes the NAD(P)-dependent oxidation of 4-(phosphooxy)-L-threonine (HTP) into 2-amino-3-oxo-4-(phosphooxy)butyric acid which spontaneously decarboxylates to form 3-amino-2-oxopropyl phosphate (AHAP). The chain is 4-hydroxythreonine-4-phosphate dehydrogenase from Campylobacter jejuni subsp. jejuni serotype O:2 (strain ATCC 700819 / NCTC 11168).